The primary structure comprises 536 residues: MSNQPNRIIIFDTTLRDGEQSPGATLNGDEKLTVARALARLGVDVIEAGFPYASPGDFEAVQQIAKVVGVEGGPSICGLARATKADIAKAAEALKPAAKPRIHTFLATSDIHLAYKLKKTRQEVLEIVPEMVAYAKSFVDDVEFSPEDAGRSDPEFLYQVLERAIAAGATTVNIPDTVGYLTPSEFGQLIRGIKENVPNIDQAIISVHGHNDLGLAVANFLEAVKNGARQLECTINGIGERAGNAALEELVMALHVRRQYYNPFLGRPVDSTEPLTNINTKEIYKTSRLVSNLTGMAVQPNKAIVGANAFAHESGIHQDGVLKNKLTYEIMDAESIGLTNNQIVLGKLSGRHAFSTRLKELGFELSETDLNKAFLRFKEVADKKKEITDWDLEAIVNDEIQQAPEVFRLELVQVSCGDQARPTATVILRGPEGQELMDAAIGTGPVDAVYKAINRVVNVPNQLIEFSVKSVTAGIDAMGEVTIRLKYENRIFSGHAANTDIIVASARAYISALNRLYAAIEQEKAEKEKAAVTSAS.

Positions 8–269 constitute a Pyruvate carboxyltransferase domain; the sequence is IIIFDTTLRD…YYNPFLGRPV (262 aa). Mn(2+)-binding residues include Asp17, His208, His210, and Asn244. The segment at 408–536 is regulatory domain; the sequence is RLELVQVSCG…KEKAAVTSAS (129 aa).

Belongs to the alpha-IPM synthase/homocitrate synthase family. LeuA type 1 subfamily. As to quaternary structure, homodimer. It depends on Mn(2+) as a cofactor.

The protein resides in the cytoplasm. The catalysed reaction is 3-methyl-2-oxobutanoate + acetyl-CoA + H2O = (2S)-2-isopropylmalate + CoA + H(+). It participates in amino-acid biosynthesis; L-leucine biosynthesis; L-leucine from 3-methyl-2-oxobutanoate: step 1/4. Its function is as follows. Catalyzes the condensation of the acetyl group of acetyl-CoA with 3-methyl-2-oxobutanoate (2-ketoisovalerate) to form 3-carboxy-3-hydroxy-4-methylpentanoate (2-isopropylmalate). In Gloeothece citriformis (strain PCC 7424) (Cyanothece sp. (strain PCC 7424)), this protein is 2-isopropylmalate synthase.